Consider the following 463-residue polypeptide: Autophagy-related protein 36 (463 aa).

The RING-type; atypical zinc finger occupies 5-45 (CSICLEVLVDKEAFTEPCLHYYHNECIKEWTKRANTCPKCR). A PHD-type zinc finger spans residues 85-131 (TNLCALCEDPSTSLIYCESCGGSFHFNCIGIGDELDSEWCCPLCGMF). Residues 229-242 (TQNSQSSEFSTENN) show a composition bias toward polar residues. The segment at 229–281 (TQNSQSSEFSTENNVVPLKNTHELGRKLKKPRRASGIKKNVVERSSSHQSTQI) is disordered. The span at 255 to 264 (KLKKPRRASG) shows a compositional bias: basic residues.

In terms of assembly, interacts with ATG28.

Its function is as follows. Micropexophagy-specific protein required for efficient micropexophagic apparatus (MIPA) formation but not for general autophagy. In Komagataella phaffii (strain GS115 / ATCC 20864) (Yeast), this protein is Autophagy-related protein 36 (ATG35).